A 3262-amino-acid polypeptide reads, in one-letter code: Striated muscle-specific serine/threonine-protein kinase (3262 aa).

A disordered region spans residues 1–33; sequence MQKARGTRGEDAGTRAPPSPGVPPKRAKVGAGR. Residue arginine 33 is modified to Omega-N-methylarginine. Residues 45–126 form the Ig-like 1 domain; the sequence is PVFLRPLKNA…GQASCEAVLT (82 aa). At serine 141 the chain carries Phosphoserine. 4 disordered regions span residues 155-185, 198-226, 280-720, and 814-875; these read RAFS…TSEE, EQEA…GPRH, GLHR…VSAG, and LAVR…APPT. Over residues 158-185 the composition is skewed to polar residues; the sequence is STPTGGSDTLVGTSLDTPPTSVTGTSEE. Pro residues predominate over residues 301 to 317; that stretch reads PALPPPSKSALLPPPSP. Serine 368 and serine 375 each carry phosphoserine. Position 379 is a phosphothreonine (threonine 379). Residues serine 382 and serine 385 each carry the phosphoserine modification. Residues 404–422 are compositionally biased toward basic and acidic residues; sequence ILDKLQFFEERRRSLERSD. Serine 423 carries the phosphoserine modification. A Phosphothreonine modification is found at threonine 453. Residues serine 457, serine 463, serine 493, serine 511, and serine 531 each carry the phosphoserine modification. Basic and acidic residues predominate over residues 459-473; that stretch reads EELRSPRGSVAERRR. Positions 510–522 are enriched in basic and acidic residues; sequence TSREELVRSHESL. Positions 543-552 are enriched in polar residues; the sequence is RPSTPKTSRA. A Phosphoserine modification is found at serine 554. Basic and acidic residues-rich tracts occupy residues 624-638 and 663-680; these read PESR…KREP and EKNR…RGPE. Residues 727 to 815 enclose the Ig-like 2 domain; it reads PVFEIPLQNM…GQATCASSLA (89 aa). Residues 820-830 are compositionally biased toward polar residues; that stretch reads GSTSPFSSPIT. Ig-like domains lie at 874-963, 968-1062, and 1069-1157; these read PTFK…ARLE, PESR…ARLT, and PLFT…AQLY. Cysteines 994 and 1046 form a disulfide. Residues serine 1133 and serine 1177 each carry the phosphoserine modification. The interval 1162–1185 is disordered; it reads RTAASGPSSKLEKMPSIPEEPEHG. Positions 1193–1283 constitute an Ig-like 6 domain; the sequence is PDFLRPLQDL…AACYAHLYVT (91 aa). The Fibronectin type-III 1 domain occupies 1290–1387; sequence PDGAPEVVAV…PSEPVQLLEH (98 aa). 2 Ig-like domains span residues 1389–1485 and 1490–1578; these read PPLE…VTLE and PRFE…AELS. Residues cysteine 1413 and cysteine 1469 are joined by a disulfide bond. A Protein kinase 1 domain is found at 1606–1859; that stretch reads YDIHQEIGRG…AEETLEHPWF (254 aa). ATP contacts are provided by residues 1612 to 1620 and lysine 1635; that span reads IGRGAFSYL. Aspartate 1724 (proton acceptor) is an active-site residue. The segment at 1913 to 2571 is disordered; the sequence is MPRRQPPSGG…SQPNLSSSVQ (659 aa). Positions 1918–1927 are enriched in low complexity; the sequence is PPSGGLSSSS. Basic and acidic residues predominate over residues 1980-1990; the sequence is EQERTPSKDQE. Phosphoserine occurs at positions 1993, 2004, 2019, 2020, and 2042. The span at 2009 to 2019 shows a compositional bias: basic and acidic residues; it reads SPRRPELRRGS. Position 2060 is an asymmetric dimethylarginine; alternate (arginine 2060). Position 2060 is an omega-N-methylarginine; alternate (arginine 2060). Residues 2069-2081 are compositionally biased toward low complexity; sequence AQRLQALRQRLLR. Phosphoserine occurs at positions 2114 and 2135. Omega-N-methylarginine is present on arginine 2144. Residues 2168-2179 show a composition bias toward polar residues; that stretch reads ESPSLSALSETQ. 2 positions are modified to phosphoserine: serine 2182 and serine 2207. The segment covering 2193–2207 has biased composition (polar residues); it reads ITKSPEPSAVTSRDS. The span at 2208–2218 shows a compositional bias: pro residues; sequence PQPPEPQPVPE. A compositionally biased stretch (basic and acidic residues) spans 2219–2229; sequence KVPEPKPEPVR. Low complexity predominate over residues 2230–2268; the sequence is AAKPAQPPLALQMPTQPLTPYAQIMQSLQLSSPTLSPQD. The span at 2337–2348 shows a compositional bias: basic and acidic residues; that stretch reads FEAKFKRSRESP. Positions 2349 to 2358 are enriched in low complexity; that stretch reads LSRGLRLLSR. The segment covering 2359–2375 has biased composition (basic and acidic residues); sequence SRSEERGPFRGAEDDGI. At serine 2379 the chain carries Phosphoserine. Threonine 2383 bears the Phosphothreonine mark. Residues 2387 to 2398 are compositionally biased toward basic and acidic residues; the sequence is LVRRPERSRSVQ. Serine 2413, serine 2417, serine 2441, serine 2442, serine 2447, and serine 2451 each carry phosphoserine. The segment covering 2461–2487 has biased composition (low complexity); that stretch reads SSTLERLSSRLQRSGSSEDSGGASGRS. The segment covering 2513–2523 has biased composition (polar residues); the sequence is QLGSQTGATTP. A phosphoserine mark is found at serine 2524 and serine 2527. Residues 2524 to 2543 show a composition bias toward low complexity; sequence SAESLGSEASGTSGSSAPGE. Over residues 2546–2557 the composition is skewed to basic residues; it reads SRHRWGLSRLRK. The residue at position 2562 (serine 2562) is a Phosphoserine. Over residues 2562-2571 the composition is skewed to polar residues; the sequence is SQPNLSSSVQ. The Ig-like 9 domain maps to 2586–2676; the sequence is PPVFHIKLKD…GSITSSCTVA (91 aa). Cysteine 2608 and cysteine 2660 are joined by a disulfide. The region spanning 2683-2777 is the Fibronectin type-III 2 domain; it reads KLAPPEVPQT…KVFIRGTPDS (95 aa). Disordered stretches follow at residues 2756-2832, 2857-2899, and 2912-2960; these read RAGQ…MSAN, ATQQ…PAPS, and APPA…PQKP. Position 2774 is a phosphothreonine (threonine 2774). Composition is skewed to low complexity over residues 2775–2789 and 2803–2831; these read PDSP…RDAP and PTSL…SMSA. Serine 2777 carries the phosphoserine modification. The Fibronectin type-III 3 domain occupies 2865-2968; it reads PPSIVVTPSE…KPYTFLEEKA (104 aa). Over residues 2883–2899 the composition is skewed to polar residues; sequence GTLTPTSSPQGVKPAPS. The span at 2913–2927 shows a compositional bias: pro residues; it reads PPAPQAPAPEPPPEP. Residues 2943-2953 are compositionally biased toward polar residues; that stretch reads SSPTPESTTLR. Serine 2944 is modified (phosphoserine). In terms of domain architecture, Protein kinase 2 spans 2946-3213; the sequence is TPESTTLRQG…LQDCLAHPWL (268 aa). Catalysis depends on aspartate 3080, which acts as the Proton acceptor.

The protein belongs to the protein kinase superfamily. CAMK Ser/Thr protein kinase family. Interacts with MTM1. Isoform 3 is found as a monomer or homodimer. In terms of processing, may be autophosphorylated. Isoform 1 is preferentially expressed in striated muscle. Non-kinase form such as isoform 3 is predominantly expressed in the aorta. Isoform 3 appears to be expressed only in highly differentiated ASMC in normal vessel walls and down-regulated in dedifferentiated ASMC in vivo. In response to vascular injuries ASMC dedifferentiate and change from a quiescent and contractile phenotype to a proliferative and synthetic phenotype. This proliferation of vascular smooth muscle cells is one of the most prominent features of atherosclerosis. Isoform 1 and isoform 4 are expressed in cardiomyocytes of the developing heart.

The protein localises to the nucleus. The catalysed reaction is L-seryl-[protein] + ATP = O-phospho-L-seryl-[protein] + ADP + H(+). The enzyme catalyses L-threonyl-[protein] + ATP = O-phospho-L-threonyl-[protein] + ADP + H(+). Functionally, isoform 3 may have a role in regulating the growth and differentiation of arterial smooth muscle cells. The protein is Striated muscle-specific serine/threonine-protein kinase (Speg) of Mus musculus (Mouse).